The chain runs to 584 residues: AAA ATPase forming ring-shaped complexes (584 aa).

Residues 10 to 96 are a coiled coil; it reads AQSGTEHAEQ…LKENLDAVTH (87 aa). Residues 40–66 are disordered; that stretch reads HQLQSAQRHAAGLSERRRAAEAQTQTA. 292-297 serves as a coordination point for ATP; the sequence is GTGKTM.

Belongs to the AAA ATPase family. As to quaternary structure, homohexamer. Assembles into a hexameric ring structure.

The chain is AAA ATPase forming ring-shaped complexes from Micrococcus luteus (strain ATCC 4698 / DSM 20030 / JCM 1464 / CCM 169 / CCUG 5858 / IAM 1056 / NBRC 3333 / NCIMB 9278 / NCTC 2665 / VKM Ac-2230) (Micrococcus lysodeikticus).